The following is a 370-amino-acid chain: Histidinol-phosphate aminotransferase (370 aa).

At lysine 223 the chain carries N6-(pyridoxal phosphate)lysine.

It belongs to the class-II pyridoxal-phosphate-dependent aminotransferase family. Histidinol-phosphate aminotransferase subfamily. Homodimer. It depends on pyridoxal 5'-phosphate as a cofactor.

The catalysed reaction is L-histidinol phosphate + 2-oxoglutarate = 3-(imidazol-4-yl)-2-oxopropyl phosphate + L-glutamate. Its pathway is amino-acid biosynthesis; L-histidine biosynthesis; L-histidine from 5-phospho-alpha-D-ribose 1-diphosphate: step 7/9. This is Histidinol-phosphate aminotransferase from Methylobacterium nodulans (strain LMG 21967 / CNCM I-2342 / ORS 2060).